A 783-amino-acid polypeptide reads, in one-letter code: Centrosomal protein of 89 kDa (783 aa).

The disordered stretch occupies residues 28 to 49 (PKAAVPRTPPPRSPNPSPERPR). Over residues 34–45 (RTPPPRSPNPSP) the composition is skewed to pro residues. At Ser50 the chain carries Phosphoserine. Disordered stretches follow at residues 63 to 157 (GRTV…DDLY) and 176 to 226 (DENI…DITG). The span at 94-107 (ATTSQLRPRPNWQS) shows a compositional bias: polar residues. Basic and acidic residues-rich tracts occupy residues 139–155 (ELGD…HSDD) and 196–214 (QQKD…KPPL). 2 coiled-coil regions span residues 234–333 (EITR…SRYQ) and 369–719 (LLLA…GELE).

The protein localises to the cytoplasm. It is found in the cytosol. Its subcellular location is the cytoskeleton. It localises to the microtubule organizing center. The protein resides in the centrosome. The protein localises to the spindle pole. It is found in the centriole. Its subcellular location is the mitochondrion intermembrane space. Its function is as follows. Required for ciliogenesis. Also plays a role in mitochondrial metabolism where it may modulate complex IV activity. This chain is Centrosomal protein of 89 kDa (CEP89), found in Homo sapiens (Human).